Here is a 344-residue protein sequence, read N- to C-terminus: Phosphoribosylformylglycinamidine cyclo-ligase (344 aa).

It belongs to the AIR synthase family.

It localises to the cytoplasm. It catalyses the reaction 2-formamido-N(1)-(5-O-phospho-beta-D-ribosyl)acetamidine + ATP = 5-amino-1-(5-phospho-beta-D-ribosyl)imidazole + ADP + phosphate + H(+). It functions in the pathway purine metabolism; IMP biosynthesis via de novo pathway; 5-amino-1-(5-phospho-D-ribosyl)imidazole from N(2)-formyl-N(1)-(5-phospho-D-ribosyl)glycinamide: step 2/2. This chain is Phosphoribosylformylglycinamidine cyclo-ligase, found in Neisseria meningitidis serogroup B (strain ATCC BAA-335 / MC58).